We begin with the raw amino-acid sequence, 37 residues long: Large ribosomal subunit protein bL36 (37 aa).

This sequence belongs to the bacterial ribosomal protein bL36 family.

The sequence is that of Large ribosomal subunit protein bL36 from Solidesulfovibrio magneticus (strain ATCC 700980 / DSM 13731 / RS-1) (Desulfovibrio magneticus).